The sequence spans 488 residues: 3-octaprenyl-4-hydroxybenzoate carboxy-lyase (488 aa).

N172 contacts Mn(2+). Prenylated FMN-binding positions include 175-177 (IYR), 189-191 (RWL), and 194-195 (RG). E238 lines the Mn(2+) pocket. The active-site Proton donor is the D287.

This sequence belongs to the UbiD family. As to quaternary structure, homohexamer. Prenylated FMN serves as cofactor. Requires Mn(2+) as cofactor.

It localises to the cell membrane. The enzyme catalyses a 4-hydroxy-3-(all-trans-polyprenyl)benzoate + H(+) = a 2-(all-trans-polyprenyl)phenol + CO2. It functions in the pathway cofactor biosynthesis; ubiquinone biosynthesis. Catalyzes the decarboxylation of 3-octaprenyl-4-hydroxy benzoate to 2-octaprenylphenol, an intermediate step in ubiquinone biosynthesis. The protein is 3-octaprenyl-4-hydroxybenzoate carboxy-lyase of Pseudomonas paraeruginosa (strain DSM 24068 / PA7) (Pseudomonas aeruginosa (strain PA7)).